The sequence spans 218 residues: Ribose-5-phosphate isomerase A (218 aa).

Residues 28-31, 81-84, and 94-97 each bind substrate; these read TGST, DGAD, and KGGG. The active-site Proton acceptor is the E103. K121 is a substrate binding site.

Belongs to the ribose 5-phosphate isomerase family. Homodimer.

It catalyses the reaction aldehydo-D-ribose 5-phosphate = D-ribulose 5-phosphate. It functions in the pathway carbohydrate degradation; pentose phosphate pathway; D-ribose 5-phosphate from D-ribulose 5-phosphate (non-oxidative stage): step 1/1. In terms of biological role, catalyzes the reversible conversion of ribose-5-phosphate to ribulose 5-phosphate. This Shewanella piezotolerans (strain WP3 / JCM 13877) protein is Ribose-5-phosphate isomerase A.